Here is a 558-residue protein sequence, read N- to C-terminus: GPI mannosyltransferase 3 (558 aa).

Helical transmembrane passes span 53–73, 81–101, 164–184, and 190–210; these read GLRSVFFPAVVALPFYLLKLL, VWFAPRVLQALVLTLIDVSVF, AYCGVRLYGNVIEALLVLLTL, and VPFLLLTGLASAIRVTSAVVL. Asn220 carries N-linked (GlcNAc...) asparagine glycosylation. Residues 234–254 form a helical membrane-spanning segment; that stretch reads IVLTGLIVLVAVLGGVMVLDY. The N-linked (GlcNAc...) asparagine glycan is linked to Asn275. Transmembrane regions (helical) follow at residues 292–312, 323–343, 348–368, and 372–392; these read VLVGIVGPHVLFTIAAPLVLW, PVLGMLGIGAWTLGFYSLIDH, FVFVVIPLSLITAAFVLVRWS, and AVVVKMNRLFVLFNIVMIYLM.

Belongs to the glycosyltransferase 22 family. PIGB subfamily.

The protein localises to the endoplasmic reticulum membrane. It functions in the pathway glycolipid biosynthesis; glycosylphosphatidylinositol-anchor biosynthesis. In terms of biological role, mannosyltransferase involved in glycosylphosphatidylinositol-anchor biosynthesis. Transfers the third alpha-1,2-mannose to Man2-GlcN-acyl-PI during GPI precursor assembly. This is GPI mannosyltransferase 3 (GPI10) from Trypanosoma brucei brucei (strain 927/4 GUTat10.1).